Here is a 189-residue protein sequence, read N- to C-terminus: Receptor activity-modifying protein 2 (189 aa).

A signal peptide spans M1 to A44. At S45 to E157 the chain is on the extracellular side. A compositionally biased stretch (polar residues) spans L49 to H61. Residues L49 to S69 form a disordered region. Residues N50, N58, N99, and N144 are each glycosylated (N-linked (GlcNAc...) asparagine). Intrachain disulfides connect C83–C113 and C98–C145. A helical transmembrane segment spans residues D158–V179. Residues W180 to A189 are Cytoplasmic-facing.

It belongs to the RAMP family. In terms of assembly, heterodimer of CALCRL and RAMP2; the interaction forms the receptor complex for adrenomedullin/ADM. Heterodimer of CALCR and RAMP2; interaction forms the AMYR2 receptor complex for calcitonin/CALC and amylin/IAPP. Ubiquitous. Expressed predominantly in embryonic brain, lung and gut and in adult heart, lung, skeletal muscle and brain.

It is found in the cell membrane. Functionally, accessory protein that interacts with and modulates the function of G-protein coupled receptors including calcitonin gene-related peptide type 1 receptor (CALCRL) and calcitonin receptor (CALCR). Required for the transport of CALCRL to the plasma membrane. Together with CALCRL, form a receptor complex for adrenomedullin/ADM. Together with CALCR, act as a receptor complex for calcitonin/CT/CALC. Together with CALCR, also act as a receptor complex for amylin/IAPP. In Mus musculus (Mouse), this protein is Receptor activity-modifying protein 2.